A 605-amino-acid polypeptide reads, in one-letter code: Elongation factor 4 (605 aa).

Positions 11–193 (KRIRNFSIIA…KVVSNIPSPR (183 aa)) constitute a tr-type G domain. GTP contacts are provided by residues 23 to 28 (DHGKST) and 140 to 143 (NKID).

The protein belongs to the TRAFAC class translation factor GTPase superfamily. Classic translation factor GTPase family. LepA subfamily.

It localises to the cell membrane. It catalyses the reaction GTP + H2O = GDP + phosphate + H(+). Functionally, required for accurate and efficient protein synthesis under certain stress conditions. May act as a fidelity factor of the translation reaction, by catalyzing a one-codon backward translocation of tRNAs on improperly translocated ribosomes. Back-translocation proceeds from a post-translocation (POST) complex to a pre-translocation (PRE) complex, thus giving elongation factor G a second chance to translocate the tRNAs correctly. Binds to ribosomes in a GTP-dependent manner. This is Elongation factor 4 from Phytoplasma mali (strain AT).